We begin with the raw amino-acid sequence, 95 residues long: UPF0473 protein GWCH70_2487 (95 aa).

This sequence belongs to the UPF0473 family.

The sequence is that of UPF0473 protein GWCH70_2487 from Geobacillus sp. (strain WCH70).